A 256-amino-acid polypeptide reads, in one-letter code: Bialaphos biosynthetic pathway regulatory protein (256 aa).

The 66-residue stretch at E184 to R249 folds into the HTH luxR-type domain. Positions D208–T227 form a DNA-binding region, H-T-H motif.

In terms of biological role, involved in the regulation of the biosynthesis of phosphinothricin tripeptide (PTT), also known as bialaphos (BA), a natural-product antibiotic and potent herbicide. The sequence is that of Bialaphos biosynthetic pathway regulatory protein (brpA) from Streptomyces hygroscopicus.